The following is a 217-amino-acid chain: D-methionine transport system permease protein MetI (217 aa).

Residues 1–19 lie on the Periplasmic side of the membrane; sequence MSEPMMWLLVRGVWETLAM. Residues 13 to 204 enclose the ABC transmembrane type-1 domain; that stretch reads VWETLAMTFV…LLVILVYLIQ (192 aa). A helical transmembrane segment spans residues 20-40; that stretch reads TFVSGFFGFVIGLPVGVLLYV. Residues 41 to 57 lie on the Cytoplasmic side of the membrane; sequence TRPGQIIANAKLYRTVS. The chain crosses the membrane as a helical span at residues 58–78; it reads AIVNIFRSIPFIILLVWMIPF. Over 79-80 the chain is Periplasmic; it reads TR. A helical membrane pass occupies residues 81–101; that stretch reads VIVGTSIGLQAAIVPLTVGAA. Over 102 to 151 the chain is Cytoplasmic; the sequence is PFIARMVENALLEIPTGLIEASRAMGATPMQIVRKVLLPEALPGLVNAAT. A helical transmembrane segment spans residues 152–172; it reads ITLITLVGYSAMGGAVGAGGL. Residues 173-185 lie on the Periplasmic side of the membrane; it reads GQIGYQYGYIGYN. A helical transmembrane segment spans residues 186-206; it reads ATVMNTVLVLLVILVYLIQFA. Topologically, residues 207–217 are cytoplasmic; that stretch reads GDRIVRAVTRK.

It belongs to the binding-protein-dependent transport system permease family. CysTW subfamily.

Its subcellular location is the cell inner membrane. Part of the binding-protein-dependent transport system for D-methionine and the toxic methionine analog alpha-methyl-methionine. Probably responsible for the translocation of the substrate across the membrane. Its function is as follows. (Microbial infection) Probably transports the toxic C-terminal region of CdiA from E.coli strain MHI813 across the inner membrane to the cytoplasm, where CdiA has a toxic effect. Toxin transport is strain-specific, mutations in this gene do not confer resistance to several other tested CdiA toxins. In Escherichia coli (strain K12), this protein is D-methionine transport system permease protein MetI (metI).